The sequence spans 600 residues: UvrABC system protein C (600 aa).

The GIY-YIG domain occupies 16–94 (EKPGCYQYFD…IKEYQPRYNV (79 aa)). Positions 208-243 (HRLVRMYRDRMQAYSEELRFEEAQICKERIELLERY) constitute a UVR domain.

This sequence belongs to the UvrC family. Interacts with UvrB in an incision complex.

Its subcellular location is the cytoplasm. Its function is as follows. The UvrABC repair system catalyzes the recognition and processing of DNA lesions. UvrC both incises the 5' and 3' sides of the lesion. The N-terminal half is responsible for the 3' incision and the C-terminal half is responsible for the 5' incision. The protein is UvrABC system protein C of Porphyromonas gingivalis (strain ATCC 33277 / DSM 20709 / CIP 103683 / JCM 12257 / NCTC 11834 / 2561).